Reading from the N-terminus, the 294-residue chain is Deubiquitinase OTUD6B (294 aa).

2 disordered regions span residues 1 to 46 (MDEA…RKQL) and 67 to 120 (AFAQ…ERDE). Composition is skewed to polar residues over residues 27-36 (KIQSMKNSVP) and 73-86 (PEPT…NGVT). The span at 111–120 (KAAQEKERDE) shows a compositional bias: basic and acidic residues. The 138-residue stretch at 150–287 (LQIRQIPSDG…GEHYNSVELL (138 aa)) folds into the OTU domain. A cys-loop region spans residues 155–161 (IPSDGHC). Asp-158 is a catalytic residue. Cys-161 (nucleophile) is an active-site residue. The segment at 222–232 (IVNTPAWGGQL) is variable-loop. Positions 270 to 280 (YMRHAYGLGEH) are his-loop. The active site involves His-280.

The catalysed reaction is Thiol-dependent hydrolysis of ester, thioester, amide, peptide and isopeptide bonds formed by the C-terminal Gly of ubiquitin (a 76-residue protein attached to proteins as an intracellular targeting signal).. Deubiquitinating enzyme that may play a role in the ubiquitin-dependent regulation of different cellular processes. This Xenopus tropicalis (Western clawed frog) protein is Deubiquitinase OTUD6B (otud6b).